The primary structure comprises 349 residues: Isopentenyl-diphosphate delta-isomerase (349 aa).

6–7 contacts substrate; it reads RK. Residues 62–64, serine 93, and asparagine 122 each bind FMN; that span reads AMT. Glutamine 152 provides a ligand contact to substrate. Glutamate 153 is a binding site for Mg(2+). FMN contacts are provided by residues lysine 184, threonine 214, 258 to 259, and 280 to 281; these read GG and AG.

Belongs to the IPP isomerase type 2 family. As to quaternary structure, homooctamer. Dimer of tetramers. FMN is required as a cofactor. Requires NADPH as cofactor. The cofactor is Mg(2+).

The protein localises to the cytoplasm. The catalysed reaction is isopentenyl diphosphate = dimethylallyl diphosphate. Involved in the biosynthesis of isoprenoids. Catalyzes the 1,3-allylic rearrangement of the homoallylic substrate isopentenyl (IPP) to its allylic isomer, dimethylallyl diphosphate (DMAPP). This chain is Isopentenyl-diphosphate delta-isomerase, found in Bacillus cereus (strain AH187).